The sequence spans 256 residues: 4-hydroxy-tetrahydrodipicolinate reductase (256 aa).

8–13 serves as a coordination point for NAD(+); it reads GASGKM. K36 lines the NADP(+) pocket. NAD(+) is bound by residues 87–89 and 111–114; these read GTT and ATNM. The active-site Proton donor/acceptor is H143. Residue H144 coordinates (S)-2,3,4,5-tetrahydrodipicolinate. K147 (proton donor) is an active-site residue. Residue 153-154 coordinates (S)-2,3,4,5-tetrahydrodipicolinate; the sequence is GT.

It belongs to the DapB family.

The protein localises to the cytoplasm. The enzyme catalyses (S)-2,3,4,5-tetrahydrodipicolinate + NAD(+) + H2O = (2S,4S)-4-hydroxy-2,3,4,5-tetrahydrodipicolinate + NADH + H(+). The catalysed reaction is (S)-2,3,4,5-tetrahydrodipicolinate + NADP(+) + H2O = (2S,4S)-4-hydroxy-2,3,4,5-tetrahydrodipicolinate + NADPH + H(+). Its pathway is amino-acid biosynthesis; L-lysine biosynthesis via DAP pathway; (S)-tetrahydrodipicolinate from L-aspartate: step 4/4. In terms of biological role, catalyzes the conversion of 4-hydroxy-tetrahydrodipicolinate (HTPA) to tetrahydrodipicolinate. This Campylobacter concisus (strain 13826) protein is 4-hydroxy-tetrahydrodipicolinate reductase.